A 180-amino-acid chain; its full sequence is MLEKDIKKILFSQEDIVTKTKELGQQLTKDYAGKNPLLVCVLKGAVPFMAELIKHIDTHIEMDFMVVSSYGGGTVSSGEVKILKDVDTNIEGRDVIFIEDIIDTGRTLLYLRDMFKYRKASSVKIATLFDKPEGRVVDIEADYVCYDVPNEFIVGFGLDYDEKYRNLPYVGVLKEEIYNK.

Residues Lys-43 and Gly-44 each contribute to the diphosphate site. 2 residues coordinate Mg(2+): Glu-99 and Asp-100. Residue Asp-103 is the Proton acceptor of the active site. Residues Lys-131, 152 to 153 (FI), and Asp-159 each bind GMP. A diphosphate-binding site is contributed by Arg-165.

Belongs to the purine/pyrimidine phosphoribosyltransferase family. The cofactor is Mg(2+).

It is found in the cytoplasm. The catalysed reaction is IMP + diphosphate = hypoxanthine + 5-phospho-alpha-D-ribose 1-diphosphate. It carries out the reaction GMP + diphosphate = guanine + 5-phospho-alpha-D-ribose 1-diphosphate. The protein operates within purine metabolism; IMP biosynthesis via salvage pathway; IMP from hypoxanthine: step 1/1. It functions in the pathway purine metabolism; GMP biosynthesis via salvage pathway; GMP from guanine: step 1/1. Its function is as follows. Purine salvage pathway enzyme that catalyzes the transfer of the ribosyl-5-phosphate group from 5-phospho-alpha-D-ribose 1-diphosphate (PRPP) to the N9 position of the 6-oxopurines hypoxanthine and guanine to form the corresponding ribonucleotides IMP (inosine 5'-monophosphate) and GMP (guanosine 5'-monophosphate), with the release of PPi. The protein is Hypoxanthine-guanine phosphoribosyltransferase (hpt) of Streptococcus thermophilus (strain CNRZ 1066).